A 406-amino-acid polypeptide reads, in one-letter code: NIPA-like protein 3 (406 aa).

The next 4 helical transmembrane spans lie at 33-53 (NLIG…ALNL), 76-96 (WWLG…SYAF), 101-121 (LIVP…IIFI), and 135-155 (VLSF…VTFA). The N-linked (GlcNAc...) asparagine glycan is linked to N166. The next 5 helical transmembrane spans lie at 171-191 (LVSW…CLLL), 202-222 (IVVI…TVKA), 240-260 (PIFY…AAFL), 271-291 (LIAS…GAIF), and 300-320 (VLHI…VFLI). Residue S372 is modified to Phosphoserine.

The protein belongs to the NIPA family.

It localises to the membrane. The protein is NIPA-like protein 3 (NIPAL3) of Homo sapiens (Human).